The sequence spans 1092 residues: Neural cell adhesion molecule 1-B (1092 aa).

A signal peptide spans 1–19 (MLHIKDLIWTLYFIGAAVA). Ig-like C2-type domains follow at residues 20–108 (LEVN…GTVN), 113–202 (QKLT…KDIQ), 208–295 (PPLI…EAIV), 303–397 (PKMT…FEVQ), and 400–489 (PKIR…FILV). The Extracellular segment spans residues 20 to 705 (LEVNIVPDQG…ATSASTGLGT (686 aa)). Disulfide bonds link C41–C93 and C136–C186. N82 carries an N-linked (GlcNAc...) asparagine glycan. Heparin is bound by residues 149-153 (RHKGK) and 158-162 (KKDVR). N219 is a glycosylation site (N-linked (GlcNAc...) asparagine). An intrachain disulfide couples C232 to C282. N-linked (GlcNAc...) asparagine glycans are attached at residues N310, N341, N417, N443, and N472. C323 and C379 are disulfide-bonded. A disulfide bridge links C420 with C473. Fibronectin type-III domains are found at residues 493-592 (TPSS…TQPV) and 595-691 (EPSA…TAKP). A helical transmembrane segment spans residues 706–723 (GAIVGILIVTFVLLLVVV). Over 724 to 1092 (DVTCFFLNKC…TQRNVNESKA (369 aa)) the chain is Cytoplasmic. A compositionally biased stretch (basic and acidic residues) spans 754–784 (KDIEEGKAAFSKDESKEPIVEVRTEEERTPN). Disordered stretches follow at residues 754-1005 (KDIE…GGTF) and 1024-1092 (TPAA…ESKA). 2 stretches are compositionally biased toward low complexity: residues 820-832 (TTVTTNSDTITET) and 839-851 (SPTSETTTLTSST). A compositionally biased stretch (polar residues) spans 860-871 (DSNTVQSVQATP). Residues 917–929 (PSAATSAAEPPTA) are compositionally biased toward low complexity. A compositionally biased stretch (polar residues) spans 968 to 978 (AQPSTVKSPTE). The segment covering 1050–1068 (AKTEKTQVEENSKPEETDV) has biased composition (basic and acidic residues). Residues 1080–1092 (NEATQRNVNESKA) are compositionally biased toward polar residues.

Post-translationally, polysialylated by ST8SIA2 and ST8SIA4. Polysialylation modulates cell interactions by confering both attractive and repulsive properties that are highly regulated by ST8SIA2 and ST8SIA4. Polysialylation is formed on a-2,3-linked sialic acid of core glycans.

Its subcellular location is the cell membrane. This protein is a cell adhesion molecule involved in neuron-neuron adhesion, neurite fasciculation, outgrowth of neurites, etc. This Xenopus laevis (African clawed frog) protein is Neural cell adhesion molecule 1-B.